The sequence spans 526 residues: Outer capsid protein VP5 (526 aa).

The interval 1–42 (MGKIIKSLSRFGKKVGNALTSNTAKKIYSTIGKAAERFAESE) is involved in membrane permeabilization.

This sequence belongs to the orbivirus VP5 family.

It localises to the virion. Its function is as follows. VP5 protein is one of the two proteins (with VP2) which constitute the virus particle outer capsid. Acts as a membrane permeabilization protein that mediates release of viral particles from endosomal compartments into the cytoplasm. Permeabilization activity is probably negatively regulated by VP2 and is triggered by endosomal degradation of VP2 and exposure to low pH. This Bluetongue virus 11 (isolate USA) (BTV 11) protein is Outer capsid protein VP5 (Segment-6).